An 890-amino-acid polypeptide reads, in one-letter code: Translation initiation factor IF-2 (890 aa).

A disordered region spans residues 45–304; that stretch reads LIDHLNQKNS…LQQGFQKPAQ (260 aa). Residues 67–81 show a composition bias toward polar residues; the sequence is STLNIPGTGGKSKSV. The span at 92–217 shows a compositional bias: basic and acidic residues; that stretch reads VKRDPQEAER…RMAEENKWTD (126 aa). The segment covering 252 to 266 has biased composition (basic residues); the sequence is GRGRNAKAARPKKGN. The span at 267–280 shows a compositional bias: basic and acidic residues; sequence KHSESKADREEARA. One can recognise a tr-type G domain in the interval 389-558; it reads PRAPVVTIMG…LLQAEVLELK (170 aa). The interval 398 to 405 is G1; it reads GHVDHGKT. Residue 398–405 coordinates GTP; it reads GHVDHGKT. The G2 stretch occupies residues 423-427; that stretch reads GITQH. The G3 stretch occupies residues 444–447; the sequence is DTPG. GTP contacts are provided by residues 444–448 and 498–501; these read DTPGH and NKID. The interval 498–501 is G4; the sequence is NKID. Positions 534-536 are G5; the sequence is SAK. At K808 the chain carries N6-acetyllysine.

Belongs to the TRAFAC class translation factor GTPase superfamily. Classic translation factor GTPase family. IF-2 subfamily.

The protein localises to the cytoplasm. In terms of biological role, one of the essential components for the initiation of protein synthesis. Protects formylmethionyl-tRNA from spontaneous hydrolysis and promotes its binding to the 30S ribosomal subunits. Also involved in the hydrolysis of GTP during the formation of the 70S ribosomal complex. This chain is Translation initiation factor IF-2, found in Escherichia fergusonii (strain ATCC 35469 / DSM 13698 / CCUG 18766 / IAM 14443 / JCM 21226 / LMG 7866 / NBRC 102419 / NCTC 12128 / CDC 0568-73).